We begin with the raw amino-acid sequence, 161 residues long: Globin CTT-VIIB-6 (161 aa).

Residues 1 to 16 (MKFFAVLALCIVGAIA) form the signal peptide. The region spanning 18-161 (PLTADEASLV…NTFAIVVPRL (144 aa)) is the Globin domain. Heme b is bound by residues His76 and His111.

The protein belongs to the globin family. Homodimer.

The sequence is that of Globin CTT-VIIB-6 (CTT-7B6) from Chironomus thummi thummi (Midge).